A 690-amino-acid polypeptide reads, in one-letter code: Lipase 2 (690 aa).

The N-terminal stretch at M1–A37 is a signal peptide. The span at L52–K71 shows a compositional bias: polar residues. The disordered stretch occupies residues L52–K266. A compositionally biased stretch (basic and acidic residues) spans Q72–G81. 3 stretches are compositionally biased toward polar residues: residues K82–Q114, S124–I171, and P185–A206. 2 stretches are compositionally biased toward basic and acidic residues: residues I225–E237 and K257–K266. Active-site charge relay system residues include S412 and H645.

Belongs to the AB hydrolase superfamily. Lipase family.

The protein localises to the secreted. It catalyses the reaction a triacylglycerol + H2O = a diacylglycerol + a fatty acid + H(+). The polypeptide is Lipase 2 (lip2) (Staphylococcus aureus (strain NCTC 8325 / PS 47)).